The primary structure comprises 25 residues: Dermaseptin-5.1TR (25 aa).

A Valine amide modification is found at V25.

As to expression, expressed by the skin glands.

It is found in the secreted. In terms of biological role, has antimicrobial activity. In Phyllomedusa trinitatis (Trinidad leaf frog), this protein is Dermaseptin-5.1TR.